A 241-amino-acid polypeptide reads, in one-letter code: Terpene cyclase pyr4 (241 aa).

The next 7 membrane-spanning stretches (helical) occupy residues 20–40, 49–69, 79–99, 113–133, 141–161, 168–188, and 206–226; these read IADW…LAMI, YGMA…YSVI, AVLT…IKFA, LPWI…ALAA, ANWG…CQLM, GASY…GIFL, and FVTW…TFLW.

This sequence belongs to the paxB family.

The protein resides in the membrane. The catalysed reaction is 2-oxo-3-[(8S)-epoxy-(2E,6E)-farnesyl]-6-(pyridin-3-yl)-2H-pyran-4-olate + H(+) = deacetylpyripyropene E. The protein operates within secondary metabolite biosynthesis; terpenoid biosynthesis. Terpene cyclase; part of the gene cluster that mediates the biosynthesis of pyripyropene A, a specific human acyl-coenzyme A:cholesterol acyltransferase 2 inhibitor. The first step of the pathway is the synthesis of nicotinyl-CoA from nicotinic acid by the nicotinic acid-CoA ligase pyr1. Nicotinyl-CoA is then a substrate of polyketide synthase pyr2 to produce 4-hydroxy-6-(3-pyridinyl)-2H-pyran-2-one (HPPO) which is further prenylated by the polyprenyl transferase pyr6 to yield farnesyl-HPPO. The next steps consist of an epoxidation of farnesyl-HPPO to epoxyfarnesyl-HPPO by FAD-dependent monooxygenase pyr5 and a cyclization of the terpenoid portion by the terpene cyclase pyr4 to yield deacetyl-pyripyropene E. The 2 cytochrome P450 monooxygenases pyr3 and pyr9, and the 2 acetyltransferases pyr7 and pyr8 are involved in the conversion of deacetyl-pyripyropene E into pyripyropene A through several cycles of oxidation and acetylation steps. Pyr7 acetylates deacetyl-pyripyropene E to pyripyropene E which is oxidized to 11-deacetyl-pyripyropene O by pyr3, which is in turn acetylated into pyripyropene O by pyr8. Pyripyropene O is then oxidized to deacetyl-pyripyropene A by pyr9. Deacetyl-pyripyropene A is finally acetylated to pyripyropene A by pyr8. The protein is Terpene cyclase pyr4 of Aspergillus fumigatus (strain ATCC MYA-4609 / CBS 101355 / FGSC A1100 / Af293) (Neosartorya fumigata).